A 120-amino-acid polypeptide reads, in one-letter code: NAD(P)H-quinone oxidoreductase subunit 3, chloroplastic (120 aa).

3 helical membrane-spanning segments follow: residues 9–29 (IFWA…FLSG), 62–82 (YYMF…LYPW), and 88–108 (VLGV…IVGL).

This sequence belongs to the complex I subunit 3 family. In terms of assembly, NDH is composed of at least 16 different subunits, 5 of which are encoded in the nucleus.

The protein resides in the plastid. It is found in the chloroplast thylakoid membrane. It catalyses the reaction a plastoquinone + NADH + (n+1) H(+)(in) = a plastoquinol + NAD(+) + n H(+)(out). It carries out the reaction a plastoquinone + NADPH + (n+1) H(+)(in) = a plastoquinol + NADP(+) + n H(+)(out). Its function is as follows. NDH shuttles electrons from NAD(P)H:plastoquinone, via FMN and iron-sulfur (Fe-S) centers, to quinones in the photosynthetic chain and possibly in a chloroplast respiratory chain. The immediate electron acceptor for the enzyme in this species is believed to be plastoquinone. Couples the redox reaction to proton translocation, and thus conserves the redox energy in a proton gradient. In Trachelium caeruleum (Blue throatwort), this protein is NAD(P)H-quinone oxidoreductase subunit 3, chloroplastic.